The following is a 166-amino-acid chain: Coiled-coil domain-containing protein 12 (166 aa).

Position 1 is an N-acetylmethionine (Met-1). The stretch at 8-28 (VGRLEEEALRRKERLKALREK) forms a coiled coil. Residues 21 to 53 (RLKALREKTGRKDREDGEPQTKQLREEGEEVGK) are compositionally biased toward basic and acidic residues. The segment at 21–55 (RLKALREKTGRKDREDGEPQTKQLREEGEEVGKHR) is disordered. Residue Lys-53 is modified to N6-acetyllysine. Lys-94 is covalently cross-linked (Glycyl lysine isopeptide (Lys-Gly) (interchain with G-Cter in SUMO2)). Positions 115–144 (DLKRDVAKKLEKLEKRTQRAIAELIRERLK) form a coiled coil. The tract at residues 146–166 (QEDSLASAVDATTGQEACDSD) is disordered. Phosphoserine is present on residues Ser-149 and Ser-165.

The polypeptide is Coiled-coil domain-containing protein 12 (Ccdc12) (Mus musculus (Mouse)).